The sequence spans 218 residues: RNA polymerase sigma-H factor (218 aa).

A Polymerase core binding motif is present at residues 62-75; the sequence is DIVQEGMIGLYKSI. Residues 182–201 constitute a DNA-binding region (H-T-H motif); the sequence is YQEISDELNRHVKSIDNALQ.

The protein belongs to the sigma-70 factor family. As to quaternary structure, interacts transiently with the RNAP core.

Functionally, sigma factors are initiation factors that promote the attachment of RNA polymerase (RNAP) to specific initiation sites and are then released. This sigma factor is involved in the transition to post-exponential phase in the beginning of sporulation. It is also required for transcription of several stationary phase genes. Association with the RNAP core increases rapidly in early exponential phase, and reamins constant expression level after. The sequence is that of RNA polymerase sigma-H factor (sigH) from Bacillus subtilis (strain 168).